A 364-amino-acid chain; its full sequence is Medium-wave-sensitive opsin 1 (364 aa).

Residues 1 to 23 (MTQPWGPQMLAGGQPPESHEDST) form a disordered region. Residues 1 to 52 (MTQPWGPQMLAGGQPPESHEDSTQASIFTYTNSNSTRGPFEGPNFHIAPRWV) lie on the Extracellular side of the membrane. Positions 17–43 (ESHEDSTQASIFTYTNSNSTRGPFEGP) are required for 11-cis-retinal regeneration. The N-linked (GlcNAc...) asparagine glycan is linked to Asn34. A helical transmembrane segment spans residues 53 to 77 (YHLTSAWMILVVIASVFTNGLVLVA). Over 78–89 (TMRFKKLRHPLN) the chain is Cytoplasmic. The helical transmembrane segment at 90–115 (WILVNLAVADLAETVIASTISVVNQF) threads the bilayer. The Extracellular segment spans residues 116-129 (YGYFVLGHPLCVVE). The cysteines at positions 126 and 203 are disulfide-linked. Residues 130 to 149 (GYTVSLCGITGLWSLAIISW) form a helical membrane-spanning segment. At 150–168 (ERWLVVCKPFGNVRFDAKL) the chain is on the cytoplasmic side. A helical membrane pass occupies residues 169–192 (AIAGIAFSWIWAAVWTAPPIFGWS). Residues 193-218 (RYWPYGLKTSCGPDVFSGTSYPGVQS) lie on the Extracellular side of the membrane. The helical transmembrane segment at 219 to 246 (YMMVLMVTCCIIPLSVIVLCYLQVWMAI) threads the bilayer. Over 247-268 (RTVAKQQKESESTQKAEKEVTR) the chain is Cytoplasmic. A helical membrane pass occupies residues 269–292 (MVVVMVFAYCLCWGPYTFFACFAT). Residues 293 to 300 (AHPGYSFH) lie on the Extracellular side of the membrane. Residues 301 to 325 (PLVAAIPSYFAKSATIYNPIIYVFM) traverse the membrane as a helical segment. Lys312 bears the N6-(retinylidene)lysine mark. Residues 326–364 (NRQFRNCILQLFGKKVEDSSELSSASRTEASSVSSVSPA) are Cytoplasmic-facing.

Belongs to the G-protein coupled receptor 1 family. Opsin subfamily. Monomer. Homodimer. Homotetramer. In terms of processing, O-glycosylated. Phosphorylated on some or all of the serine and threonine residues present in the C-terminal region. In terms of tissue distribution, expressed in cone photoreceptor cells.

The protein localises to the membrane. Visual pigments are the light-absorbing molecules that mediate vision. They consist of an apoprotein, opsin, covalently linked to cis-retinal. May increase spectral sensitivity in dim light. This is Medium-wave-sensitive opsin 1 (OPN1MW) from Oryctolagus cuniculus (Rabbit).